The chain runs to 121 residues: Ribosome-binding factor A (121 aa).

It belongs to the RbfA family. As to quaternary structure, monomer. Binds 30S ribosomal subunits, but not 50S ribosomal subunits or 70S ribosomes.

The protein resides in the cytoplasm. Its function is as follows. One of several proteins that assist in the late maturation steps of the functional core of the 30S ribosomal subunit. Associates with free 30S ribosomal subunits (but not with 30S subunits that are part of 70S ribosomes or polysomes). Required for efficient processing of 16S rRNA. May interact with the 5'-terminal helix region of 16S rRNA. In Brevibacillus brevis (strain 47 / JCM 6285 / NBRC 100599), this protein is Ribosome-binding factor A.